We begin with the raw amino-acid sequence, 435 residues long: 5-methylthioadenosine/S-adenosylhomocysteine deaminase (435 aa).

Residues His-65 and His-67 each coordinate Zn(2+). Positions 94, 150, and 189 each coordinate substrate. His-216 contributes to the Zn(2+) binding site. The substrate site is built by Glu-219 and Asp-304. Position 304 (Asp-304) interacts with Zn(2+).

This sequence belongs to the metallo-dependent hydrolases superfamily. MTA/SAH deaminase family. It depends on Zn(2+) as a cofactor.

The catalysed reaction is S-adenosyl-L-homocysteine + H2O + H(+) = S-inosyl-L-homocysteine + NH4(+). The enzyme catalyses S-methyl-5'-thioadenosine + H2O + H(+) = S-methyl-5'-thioinosine + NH4(+). In terms of biological role, catalyzes the deamination of 5-methylthioadenosine and S-adenosyl-L-homocysteine into 5-methylthioinosine and S-inosyl-L-homocysteine, respectively. Is also able to deaminate adenosine. The protein is 5-methylthioadenosine/S-adenosylhomocysteine deaminase of Bacillus cereus (strain ZK / E33L).